Reading from the N-terminus, the 473-residue chain is Asparagine--tRNA ligase (473 aa).

This sequence belongs to the class-II aminoacyl-tRNA synthetase family. In terms of assembly, homodimer.

The protein localises to the cytoplasm. The enzyme catalyses tRNA(Asn) + L-asparagine + ATP = L-asparaginyl-tRNA(Asn) + AMP + diphosphate + H(+). This Treponema denticola (strain ATCC 35405 / DSM 14222 / CIP 103919 / JCM 8153 / KCTC 15104) protein is Asparagine--tRNA ligase.